The chain runs to 298 residues: uncharacterized protein (298 aa).

Residues 2–229 form the ABC transporter domain; the sequence is LTIDHVTKTF…FGKKNVTIHS (228 aa). Position 34–41 (34–41) interacts with ATP; that stretch reads GANGAGKT.

This sequence belongs to the ABC transporter superfamily.

It is found in the cell membrane. This is an uncharacterized protein from Bacillus subtilis (strain 168).